Reading from the N-terminus, the 181-residue chain is Type II secretion system protein H (181 aa).

Positions 1 to 5 (MRQRG) are cleaved as a propeptide — leader sequence. F6 is subject to N-methylphenylalanine. The chain crosses the membrane as a helical span at residues 6–29 (FTLLEIMLVVLLAGVAATLVMMAI).

The protein belongs to the GSP H family. As to quaternary structure, type II secretion is composed of four main components: the outer membrane complex, the inner membrane complex, the cytoplasmic secretion ATPase and the periplasm-spanning pseudopilus. Interacts with core component OutG. In terms of processing, cleaved by prepilin peptidase. Post-translationally, methylated by prepilin peptidase at the amino group of the N-terminal phenylalanine once the leader sequence is cleaved by prepilin peptidase.

It localises to the cell inner membrane. Functionally, component of the type II secretion system required for the energy-dependent secretion of extracellular factors such as proteases and toxins from the periplasm. Part of the pseudopilus tip complex that is critical for the recognition and binding of secretion substrates. This Dickeya chrysanthemi (Pectobacterium chrysanthemi) protein is Type II secretion system protein H (outH).